The primary structure comprises 78 residues: Mitotic-spindle organizing protein 1 (78 aa).

At A2 the chain carries N-acetylalanine.

Belongs to the MOZART1 family. In terms of assembly, associates with the gamma-tubulin ring complex (gTuRC) consisting of TUBGCP2, TUBGCP3, TUBGCP4, TUBGCP5 and TUBGCP6 and gamma-tubulin TUBG1 or TUBG2; within the complex, interacts with TUBGCP3 and TUBGCP6 to form a luminal bridge with actin that stabilizes the initial structure during complex assembly. Interacts with TUBG1.

The protein localises to the cytoplasm. Its subcellular location is the cytoskeleton. The protein resides in the microtubule organizing center. It is found in the centrosome. It localises to the spindle. Functionally, required for the recruitment and the assembly of the gamma-tubulin ring complex (gTuRC) at the centrosome. The gTuRC regulates the minus-end nucleation of alpha-beta tubulin heterodimers that grow into microtubule protafilaments, a critical step in centrosome duplication and spindle formation. This is Mitotic-spindle organizing protein 1 (Mzt1) from Mus musculus (Mouse).